Reading from the N-terminus, the 948-residue chain is ATPase 2, plasma membrane-type (948 aa).

Ser-2 carries the post-translational modification N-acetylserine. The Cytoplasmic segment spans residues Ser-2–Phe-61. Residues Leu-62–Ile-81 form a helical membrane-spanning segment. At Ala-82–Trp-93 the chain is on the extracellular side. The helical transmembrane segment at Gln-94–Glu-114 threads the bilayer. Residues Asn-115–Ile-243 are Cytoplasmic-facing. A helical transmembrane segment spans residues Gly-244 to Pro-264. The Extracellular segment spans residues Ile-265–Gly-273. A helical membrane pass occupies residues Ile-274 to Thr-291. The Cytoplasmic portion of the chain corresponds to Val-292–Lys-643. Catalysis depends on Asp-329, which acts as the 4-aspartylphosphate intermediate. Mg(2+) is bound by residues Asp-588 and Asp-592. Residues Asn-644 to Leu-665 traverse the membrane as a helical segment. Residues Ile-666–Asp-670 are Extracellular-facing. The chain crosses the membrane as a helical span at residues Phe-671–Asp-693. Topologically, residues Arg-694–Ile-709 are cytoplasmic. The helical transmembrane segment at Phe-710 to Ala-730 threads the bilayer. The Extracellular segment spans residues Ala-731–His-751. Residues Glu-752–Thr-772 traverse the membrane as a helical segment. Topologically, residues Arg-773 to Gly-784 are cytoplasmic. The chain crosses the membrane as a helical span at residues Ala-785–Ala-805. Topologically, residues Asn-806 to Arg-813 are extracellular. The chain crosses the membrane as a helical span at residues Gly-814–Leu-834. Over Asp-835–Val-948 the chain is Cytoplasmic. A Phosphothreonine modification is found at Thr-881. Phosphoserine is present on Ser-899. Ser-931 is subject to Phosphoserine; by CIPK11. Positions Tyr-946–Val-948 are interaction with 14-3-3 proteins. Thr-947 bears the Phosphothreonine mark.

The protein belongs to the cation transport ATPase (P-type) (TC 3.A.3) family. Type IIIA subfamily. Binds to 14-3-3 proteins. The binding is induced by phosphorylation of Thr-947 and it activates the H(+)-ATPase. Interacts (via the R-domain) with PSY1R (via C-terminus). Part of a functional complex containing PSKR1, BAK1, CNGC17, and AHA. Interacts with CNGC17 and PSKR1. Interacts with PP2C67/PP2C-D1 at the plasma membrane. Interacts with AHA1. Phosphorylated, probably by PHOT1 and PHOT2, at C-terminal Thr-947 in guard cells in response to blue light to induce stomatal opening. In terms of processing, phosphorylation at Thr-881 by PSY1R. This phosphorylation activates proton pumping. Decreased phosphorylation in response to flg22 elicitation. Post-translationally, phosphorylation at Ser-899 is specifically induced by RALF1, thus leading to the inhibition of proton transport. Increased phosphorylation in response to flg22 elicitation. Phosphorylation of Thr-947 induces the binding to 14-3-3 proteins, but phosphorylation of Ser-931 interferes with this binding no matter whether Thr-947 is phosphorylated or not. Decreased phosphorylation in response to flg22 elicitation. Phosphorylation of Thr-947 is enhanced by the presence of brassinolide (BL) via the BRI1-BIN2 pathway and prior the trigger of hypocotyl elongation. Inactivated by PP2C67/PP2C-D1-mediated Thr-947 dephosphorylation; SAUR19 inhibits the action of PP2C67/PP2C-D1 and thus promotes the active phosphorylated form. In terms of processing, abscisic acid induces dephosphorylation of AHA2 in etiolated seedlings, suppressing ATP hydrolysis and hypocotyl elongation. Higher levels in roots than in shoots. Expressed in epidermal and root cortex cells, in phloem, xylem and root hairs. Detected in cotyledons, leaves, hypocotyls, roots and root hairs. Expressed in guard cells and mesophyll cells.

The protein localises to the cell membrane. It carries out the reaction ATP + H2O + H(+)(in) = ADP + phosphate + 2 H(+)(out). Regulated by an auto-inhibitory C-terminal domain that can be displaced by phosphorylation of Thr-947 and the subsequent binding of 14-3-3 proteins. Negatively regulated by PKS5. PKS5 phosphorylates Ser-931, inhibiting interaction with the activating 14-3-3 protein. Positively regulated by PSY1R. PSY1R phosphorylates Thr-881, situated in the auto-inhibitory region I of the C-terminal domain, causing pump activation. Negatively regulated by the secreted peptide RALF. After specific binding to FERONIA, RALF causes phosphorylation at Ser-899, mediating the inhibition of proton transport. Activated by lysophospholipids, without the involvement of phosphorylation of Thr-947. This activation is critically dependent on the single autoinhibitory residue Leu-919. Repressed by PP2C-D phosphatases (e.g. PP2C67/PP2C-D1 and PP2C64/PP2C-D5) which dephosphorylates Thr-947. Triggered by SAUR19 via phosphorylation of the C-terminal autoinhibitory domain (e.g. Thr-947), as a result of the inhibition of PP2C67/PP2C-D1. Phosphorylation on Thr residues is repressed by tyrphostin 9, sphingosine, GW5074 and BML-265. By contrast, the fungal phytotoxin fusicoccin (FC) promotes phosphorylation of Thr-947 independently to BHP, thus leading to large stomatal opening. In terms of biological role, the plasma membrane H(+) ATPase of plants and fungi generates a proton gradient that drives the active transport of nutrients by H(+)-symport. The resulting external acidification and/or internal alkinization may mediate growth responses. Involved in maintaining the membrane potential and delta-pH, together forming the plasma membrane protonmotive force (PMF) required for root and hypocotyl elongation and root tropism. Important for root growth and development during different nitrogen regimes. Forms a functional cation-translocating unit with CNGC17 that is activated by PSKR1/BAK1 and possibly other BAK1/RLK complexes. Promotes stomatal opening in response to blue light. The chain is ATPase 2, plasma membrane-type from Arabidopsis thaliana (Mouse-ear cress).